A 172-amino-acid chain; its full sequence is 3-hydroxydecanoyl-[acyl-carrier-protein] dehydratase (172 aa).

Residue histidine 70 is part of the active site.

It belongs to the thioester dehydratase family. FabA subfamily. As to quaternary structure, homodimer.

Its subcellular location is the cytoplasm. It carries out the reaction a (3R)-hydroxyacyl-[ACP] = a (2E)-enoyl-[ACP] + H2O. It catalyses the reaction (3R)-hydroxydecanoyl-[ACP] = (2E)-decenoyl-[ACP] + H2O. The enzyme catalyses (2E)-decenoyl-[ACP] = (3Z)-decenoyl-[ACP]. Its pathway is lipid metabolism; fatty acid biosynthesis. Necessary for the introduction of cis unsaturation into fatty acids. Catalyzes the dehydration of (3R)-3-hydroxydecanoyl-ACP to E-(2)-decenoyl-ACP and then its isomerization to Z-(3)-decenoyl-ACP. Can catalyze the dehydratase reaction for beta-hydroxyacyl-ACPs with saturated chain lengths up to 16:0, being most active on intermediate chain length. This is 3-hydroxydecanoyl-[acyl-carrier-protein] dehydratase from Xylella fastidiosa (strain M12).